Here is a 178-residue protein sequence, read N- to C-terminus: Cyclin-dependent kinase inhibitor 1B (178 aa).

The span at 1-11 (MSNVRVSNGSP) shows a compositional bias: polar residues. Residues 1 to 31 (MSNVRVSNGSPSLERMDARQAEYPKPSACRN) form a disordered region. Position 10 is a phosphoserine; by UHMK1 (serine 10). Positions 51–91 (DMEEASQRKWNFDFQNHKPLEGKYEWQEVEKGSLPEFYYRP) are interaction with CDK2. Phosphotyrosine; by SRC is present on tyrosine 74. The tract at residues 87–178 (FYYRPPRPPK…RTEENVSDGS (92 aa)) is disordered. Residue tyrosine 88 is modified to Phosphotyrosine; by ABL, LYN, SRC and JAK2. Tyrosine 89 is subject to Phosphotyrosine. The span at 104–113 (QESQDVSGTR) shows a compositional bias: polar residues. The span at 126–137 (EDTHLVDQKTDT) shows a compositional bias: basic and acidic residues. Residues 153–169 (KRPATDDSSPQNKRANR) carry the Nuclear localization signal motif. Threonine 157 carries the post-translational modification Phosphothreonine; by CaMK1, PKB/AKT1, RPS6KA1, RPS6KA3 and PIM1. Threonine 170 carries the post-translational modification Phosphothreonine.

Belongs to the CDI family. In terms of assembly, forms a ternary complex composed of CCNE1, CDK2 and CDKN1B. Interacts directly with CCNE1; the interaction is inhibited by CDK2-dependent phosphorylation. Interacts with COPS5, subunit of the COP9 signalosome complex; the interaction leads to CDKN1B degradation. Interacts with NUP50; the interaction leads to nuclear import and degradation of phosphorylated CDKN1B. Interacts with CCND1 and SNX6. Interacts (Thr-198-phosphorylated form) with 14-3-3 proteins, binds strongly YWHAQ, weakly YWHAE and YWHAH, but not YWHAB nor YWHAZ; the interaction with YWHAQ results in translocation to the cytoplasm. Interacts with AKT1 and LYN; the interactions lead to cytoplasmic mislocation, phosphorylation of CDKN1B and inhibition of cell cycle arrest. Forms a ternary complex with CCNA2 and CDK2; CDKN1B inhibits the kinase activity of CDK2 through conformational rearrangements. Interacts (unphosphorylated form) with CDK2. Forms a complex with CDK2 and SPDYA, but does not directly interact with SPDYA. Forms a ternary complex composed of cyclin D, CDK4 and CDKN1B. Interacts (phosphorylated on Tyr-88 and Tyr-89) with CDK4; the interaction is required for cyclin D and CDK4 complex assembly, induces nuclear translocation and activates the CDK4 kinase activity. Interacts with GRB2. Interacts with PIM1. Identified in a complex with SKP1, SKP2 and CKS1B. Interacts with UHMK1; the interaction leads to cytoplasmic mislocation, phosphorylation of CDKN1B and inhibition of cell cycle arrest. Also interacts with CDK1. Dephosphorylated by PPM1H, leading to CDKN1B stability. Phosphorylated; phosphorylation occurs on serine, threonine and tyrosine residues. Phosphorylation on Ser-10 is the major site of phosphorylation in resting cells, takes place at the G(0)-G(1) phase and leads to protein stability. Phosphorylation on other sites is greatly enhanced by mitogens, growth factors, MYC and in certain cancer cell lines. The phosphorylated form found in the cytoplasm is inactivate. Phosphorylation on Tyr-88 has no effect on binding CDK complexes. Post-translationally, ubiquitinated; in the cytoplasm by the KPC complex (composed of RNF123/KPC1 and UBAC1/KPC2) and, in the nucleus, by SCF(SKP2). The latter requires prior phosphorylation on Thr-187. Ubiquitinated; by a TRIM21-containing SCF(SKP2)-like complex; leads to its degradation. In terms of processing, subject to degradation in the lysosome. Interaction with SNX6 promotes lysosomal degradation.

It is found in the nucleus. Its subcellular location is the cytoplasm. The protein resides in the endosome. Important regulator of cell cycle progression. Inhibits the kinase activity of CDK2 bound to cyclin A, but has little inhibitory activity on CDK2 bound to SPDYA. Involved in G1 arrest. Potent inhibitor of cyclin E- and cyclin A-CDK2 complexes. Forms a complex with cyclin type D-CDK4 complexes and is involved in the assembly, stability, and modulation of CCND1-CDK4 complex activation. Acts either as an inhibitor or an activator of cyclin type D-CDK4 complexes depending on its phosphorylation state and/or stoichometry. The polypeptide is Cyclin-dependent kinase inhibitor 1B (CDKN1B) (Neovison vison (American mink)).